Here is a 100-residue protein sequence, read N- to C-terminus: Urease subunit gamma (100 aa).

Belongs to the urease gamma subunit family. Heterotrimer of UreA (gamma), UreB (beta) and UreC (alpha) subunits. Three heterotrimers associate to form the active enzyme.

The protein resides in the cytoplasm. The catalysed reaction is urea + 2 H2O + H(+) = hydrogencarbonate + 2 NH4(+). The protein operates within nitrogen metabolism; urea degradation; CO(2) and NH(3) from urea (urease route): step 1/1. This chain is Urease subunit gamma, found in Mycobacteroides abscessus (strain ATCC 19977 / DSM 44196 / CCUG 20993 / CIP 104536 / JCM 13569 / NCTC 13031 / TMC 1543 / L948) (Mycobacterium abscessus).